The primary structure comprises 457 residues: Argininosuccinate lyase (457 aa).

Belongs to the lyase 1 family. Argininosuccinate lyase subfamily.

The protein localises to the cytoplasm. It catalyses the reaction 2-(N(omega)-L-arginino)succinate = fumarate + L-arginine. The protein operates within amino-acid biosynthesis; L-arginine biosynthesis; L-arginine from L-ornithine and carbamoyl phosphate: step 3/3. The protein is Argininosuccinate lyase of Bacillus pumilus (strain SAFR-032).